Reading from the N-terminus, the 283-residue chain is Elongation factor Ts (283 aa).

The tract at residues 80–83 is involved in Mg(2+) ion dislocation from EF-Tu; sequence TDFV.

The protein belongs to the EF-Ts family.

It localises to the cytoplasm. Functionally, associates with the EF-Tu.GDP complex and induces the exchange of GDP to GTP. It remains bound to the aminoacyl-tRNA.EF-Tu.GTP complex up to the GTP hydrolysis stage on the ribosome. The chain is Elongation factor Ts from Serratia proteamaculans (strain 568).